We begin with the raw amino-acid sequence, 376 residues long: Methionine import ATP-binding protein MetN 1 (376 aa).

The ABC transporter domain maps to 34–273; it reads VRFINLGKTY…PQHEVSKTLL (240 aa). 70-77 lines the ATP pocket; that stretch reads GRSGAGKS.

This sequence belongs to the ABC transporter superfamily. Methionine importer (TC 3.A.1.24) family. The complex is composed of two ATP-binding proteins (MetN), two transmembrane proteins (MetI) and a solute-binding protein (MetQ).

It localises to the cell inner membrane. It carries out the reaction L-methionine(out) + ATP + H2O = L-methionine(in) + ADP + phosphate + H(+). The enzyme catalyses D-methionine(out) + ATP + H2O = D-methionine(in) + ADP + phosphate + H(+). Functionally, part of the ABC transporter complex MetNIQ involved in methionine import. Responsible for energy coupling to the transport system. The polypeptide is Methionine import ATP-binding protein MetN 1 (Pseudomonas syringae pv. tomato (strain ATCC BAA-871 / DC3000)).